Consider the following 259-residue polypeptide: Putative deoxyribonuclease TATDN1 homolog (259 aa).

Positions 82, 116, 138, and 186 each coordinate a divalent metal cation.

It belongs to the metallo-dependent hydrolases superfamily. TatD-type hydrolase family. The cofactor is a divalent metal cation.

It localises to the nucleus. Putative deoxyribonuclease. This Vairimorpha ceranae (strain BRL01) (Microsporidian parasite) protein is Putative deoxyribonuclease TATDN1 homolog.